The chain runs to 96 residues: Protein Vpr (96 aa).

The interval Met1–Leu42 is homooligomerization. Ser79 carries the phosphoserine; by host modification.

This sequence belongs to the HIV-1 VPR protein family. In terms of assembly, homooligomer, may form homodimer. Interacts with p6-gag region of the Pr55 Gag precursor protein through a (Leu-X-X)4 motif near the C-terminus of the P6gag protein. Interacts with host UNG. May interact with host RAD23A/HHR23A. Interacts with host VPRBP/DCAF1, leading to hijack the CUL4A-RBX1-DDB1-DCAF1/VPRBP complex, mediating ubiquitination of host proteins such as TERT and ZGPAT and arrest of the cell cycle in G2 phase. Post-translationally, phosphorylated on several residues by host. These phosphorylations regulate VPR activity for the nuclear import of the HIV-1 pre-integration complex.

The protein localises to the virion. It localises to the host nucleus. The protein resides in the host extracellular space. Functionally, during virus replication, may deplete host UNG protein, and incude G2-M cell cycle arrest. Acts by targeting specific host proteins for degradation by the 26S proteasome, through association with the cellular CUL4A-DDB1 E3 ligase complex by direct interaction with host VPRPB/DCAF-1. Cell cycle arrest reportedly occurs within hours of infection and is not blocked by antiviral agents, suggesting that it is initiated by the VPR carried into the virion. Additionally, VPR induces apoptosis in a cell cycle dependent manner suggesting that these two effects are mechanistically linked. Detected in the serum and cerebrospinal fluid of AIDS patient, VPR may also induce cell death to bystander cells. During virus entry, plays a role in the transport of the viral pre-integration (PIC) complex to the host nucleus. This function is crucial for viral infection of non-dividing macrophages. May act directly at the nuclear pore complex, by binding nucleoporins phenylalanine-glycine (FG)-repeat regions. This chain is Protein Vpr, found in Human immunodeficiency virus type 1 group M subtype G (isolate 92NG083) (HIV-1).